A 178-amino-acid chain; its full sequence is MDMVKVNSMDFGEFVDVFGNIVEKCPLIAAAVWSQRPFSGLEDLENHFFAFIDALPRSGQEGILRCHPDLAGRDLQQGTLTAESQREQSQAGLTSLDTDDRLRLQQLNAQYRERFGFPFVLAARLSDRATVPRELARRLQCQPESELRTALGEVKKISHLRLTDLLGAHSHSARVELP.

The active-site Proton donor is His67. Substrate is bound by residues Pro68, 84 to 88 (SQREQ), and 119 to 123 (FVLAA).

The protein belongs to the OHCU decarboxylase family.

The protein resides in the peroxisome. The enzyme catalyses 5-hydroxy-2-oxo-4-ureido-2,5-dihydro-1H-imidazole-5-carboxylate + H(+) = (S)-allantoin + CO2. The protein operates within purine metabolism; urate degradation; (S)-allantoin from urate: step 3/3. In terms of biological role, catalyzes the stereoselective decarboxylation of 2-oxo-4-hydroxy-4-carboxy-5-ureidoimidazoline (OHCU) to (S)-allantoin. In Mus musculus (Mouse), this protein is 2-oxo-4-hydroxy-4-carboxy-5-ureidoimidazoline decarboxylase (Urad).